Reading from the N-terminus, the 228-residue chain is LHFPL tetraspan subfamily member 2 protein (228 aa).

4 consecutive transmembrane segments (helical) span residues 11–31 (MLWTLLSIVVAFAELIAFMSA), 102–122 (IFLAVGIFILCMVALVSVFTM), 132–152 (IFNVCGLLQGIAGLFLILGLI), and 181–201 (LGWAFYTAIGGTVLTFICAVF).

This sequence belongs to the LHFP family. Expressed in all tissues and cell lines examined except brain and peripheral blood leukocytes.

The protein localises to the membrane. Its function is as follows. Plays a role in female and male fertility. Involved in distal reproductive tract development. The sequence is that of LHFPL tetraspan subfamily member 2 protein from Homo sapiens (Human).